The sequence spans 156 residues: Large ribosomal subunit protein uL15 (156 aa).

The tract at residues Gly-14 to Lys-35 is disordered.

This sequence belongs to the universal ribosomal protein uL15 family. As to quaternary structure, part of the 50S ribosomal subunit.

In terms of biological role, binds to the 23S rRNA. The polypeptide is Large ribosomal subunit protein uL15 (Pyrobaculum islandicum (strain DSM 4184 / JCM 9189 / GEO3)).